We begin with the raw amino-acid sequence, 702 residues long: Elongation factor G (702 aa).

The tr-type G domain maps to 8 to 290 (SRYRNIGISA…AIIEFLPAPN (283 aa)). GTP-binding positions include 17–24 (AHIDAGKT), 88–92 (DTPGH), and 142–145 (NKMD).

The protein belongs to the TRAFAC class translation factor GTPase superfamily. Classic translation factor GTPase family. EF-G/EF-2 subfamily.

It is found in the cytoplasm. Functionally, catalyzes the GTP-dependent ribosomal translocation step during translation elongation. During this step, the ribosome changes from the pre-translocational (PRE) to the post-translocational (POST) state as the newly formed A-site-bound peptidyl-tRNA and P-site-bound deacylated tRNA move to the P and E sites, respectively. Catalyzes the coordinated movement of the two tRNA molecules, the mRNA and conformational changes in the ribosome. This is Elongation factor G from Buchnera aphidicola subsp. Acyrthosiphon pisum (strain 5A).